The primary structure comprises 221 residues: Ras-related protein RABA5a (221 aa).

Residue Gly-21 to Ser-28 coordinates GTP. An Effector region motif is present at residues Ser-43 to Phe-51. GTP is bound by residues Asp-69–Gln-73, Asn-127–Asp-130, and Ser-157–Ala-158. 2 S-geranylgeranyl cysteine lipidation sites follow: Cys-218 and Cys-219.

This sequence belongs to the small GTPase superfamily. Rab family.

The protein localises to the cell membrane. In terms of biological role, intracellular vesicle trafficking and protein transport. This is Ras-related protein RABA5a (RABA5A) from Arabidopsis thaliana (Mouse-ear cress).